The sequence spans 490 residues: Serine palmitoyltransferase 2 (490 aa).

The helical transmembrane segment at 10 to 30 threads the bilayer; the sequence is VDDVGYLPILFLYIAYAFIIF. K321 carries the post-translational modification N6-(pyridoxal phosphate)lysine.

It belongs to the class-II pyridoxal-phosphate-dependent aminotransferase family. Forms a heterodimer with sptA. Pyridoxal 5'-phosphate serves as cofactor.

It is found in the endoplasmic reticulum membrane. The catalysed reaction is L-serine + hexadecanoyl-CoA + H(+) = 3-oxosphinganine + CO2 + CoA. It participates in lipid metabolism; sphingolipid metabolism. Its function is as follows. Catalytic subunit of serine palmitoyltransferase (SPT), which catalyzes the committed step in the synthesis of sphingolipids, the condensation of serine with palmitoyl CoA to form the long chain base 3-ketosphinganine. The sequence is that of Serine palmitoyltransferase 2 (sptB) from Dictyostelium discoideum (Social amoeba).